Here is a 260-residue protein sequence, read N- to C-terminus: UPF0246 protein SCO2297 (260 aa).

Belongs to the UPF0246 family.

This chain is UPF0246 protein SCO2297, found in Streptomyces coelicolor (strain ATCC BAA-471 / A3(2) / M145).